Here is a 323-residue protein sequence, read N- to C-terminus: Polycomb complex protein BMI-1-B (323 aa).

Residues 18–57 (CVLCGGYFIDAATIIECLHSFCKTCIVRYLETSKYCPICD) form an RING-type zinc finger. The short motif at 81 to 95 (KLVPGLFKGEMKRRR) is the Nuclear localization signal element. Residues 238-310 (PHTDRINNTS…HQNPFANRAR (73 aa)) form a disordered region. Residues 287 to 301 (HISSTINGTNSSSSH) show a composition bias toward low complexity.

As to quaternary structure, component of a PRC1-like complex. Interacts with cbx4.

It localises to the nucleus. Component of a Polycomb group (PcG) multiprotein PRC1-like complex, a complex class required to maintain the transcriptionally repressive state of many genes, including Hox genes, throughout development. PcG PRC1 complex acts via chromatin remodeling and modification of histones; it mediates monoubiquitination of histone H2A 'Lys-119', rendering chromatin heritably changed in its expressibility. In the PRC1 complex, it is required to stimulate the E3 ubiquitin-protein ligase activity of rnf2. The chain is Polycomb complex protein BMI-1-B (bmi1b) from Xenopus laevis (African clawed frog).